An 83-amino-acid polypeptide reads, in one-letter code: MMMRVFIAMFFLLALVEAGWPRLYDKNCKKNILRTYCSNKICGEATKNTNGELQCTMYCRCANGCFRGQYIDWPNQQTNLLFC.

The N-terminal stretch at 1-18 (MMMRVFIAMFFLLALVEA) is a signal peptide. Positions 19-26 (GWPRLYDK) are excised as a propeptide.

The protein belongs to the conotoxin E superfamily. Contain 4 disulfide bonds. In terms of tissue distribution, expressed by the venom duct.

The protein localises to the secreted. Probable neurotoxin. The protein is Conotoxin Im22.1 of Conus imperialis (Imperial cone).